The sequence spans 435 residues: 5-methylthioadenosine/S-adenosylhomocysteine deaminase (435 aa).

Residues His65 and His67 each contribute to the Zn(2+) site. Residues Glu94, Arg150, and His189 each contribute to the substrate site. Position 216 (His216) interacts with Zn(2+). Residues Glu219 and Asp304 each coordinate substrate. A Zn(2+)-binding site is contributed by Asp304.

The protein belongs to the metallo-dependent hydrolases superfamily. MTA/SAH deaminase family. The cofactor is Zn(2+).

It carries out the reaction S-adenosyl-L-homocysteine + H2O + H(+) = S-inosyl-L-homocysteine + NH4(+). It catalyses the reaction S-methyl-5'-thioadenosine + H2O + H(+) = S-methyl-5'-thioinosine + NH4(+). Catalyzes the deamination of 5-methylthioadenosine and S-adenosyl-L-homocysteine into 5-methylthioinosine and S-inosyl-L-homocysteine, respectively. Is also able to deaminate adenosine. In Bacillus cereus (strain 03BB102), this protein is 5-methylthioadenosine/S-adenosylhomocysteine deaminase.